We begin with the raw amino-acid sequence, 236 residues long: Uridylate kinase (236 aa).

Position 12–15 (12–15 (KLSG)) interacts with ATP. Positions 20–25 (GEKGFG) are involved in allosteric activation by GTP. Gly-54 lines the UMP pocket. ATP contacts are provided by Gly-55 and Arg-59. Residues Asp-72 and 133 to 140 (TGNPYFST) contribute to the UMP site. ATP contacts are provided by Asn-161, Tyr-166, and Asp-169.

This sequence belongs to the UMP kinase family. Homohexamer.

It is found in the cytoplasm. The catalysed reaction is UMP + ATP = UDP + ADP. The protein operates within pyrimidine metabolism; CTP biosynthesis via de novo pathway; UDP from UMP (UMPK route): step 1/1. Its activity is regulated as follows. Allosterically activated by GTP. Inhibited by UTP. Its function is as follows. Catalyzes the reversible phosphorylation of UMP to UDP. The polypeptide is Uridylate kinase (Alkaliphilus oremlandii (strain OhILAs) (Clostridium oremlandii (strain OhILAs))).